A 283-amino-acid chain; its full sequence is Elongation factor Ts (283 aa).

An involved in Mg(2+) ion dislocation from EF-Tu region spans residues 80–83 (TDFV).

The protein belongs to the EF-Ts family.

The protein resides in the cytoplasm. Associates with the EF-Tu.GDP complex and induces the exchange of GDP to GTP. It remains bound to the aminoacyl-tRNA.EF-Tu.GTP complex up to the GTP hydrolysis stage on the ribosome. The polypeptide is Elongation factor Ts (Haemophilus influenzae (strain PittGG)).